The sequence spans 268 residues: Secreted RxLR effector protein 5 (268 aa).

Residues 1–21 (MRGAFYMAITLFLARSRSATA) form the signal peptide. The short motif at 48–63 (RYLRDGLALSAANEER) is the RxLR-dEER element. Asn-104 carries an N-linked (GlcNAc...) asparagine glycan.

This sequence belongs to the RxLR effector family.

Its subcellular location is the secreted. It localises to the host nucleus. Effector that acts as a broad suppressor of cell death to interrupt plant immunity. Inhibits cell death induced by cell death-inducing proteins, including the PAMP elicitor INF1 from P.infestans. This chain is Secreted RxLR effector protein 5, found in Plasmopara viticola (Downy mildew of grapevine).